The sequence spans 388 residues: Dual specificity mitogen-activated protein kinase kinase 1 (388 aa).

The interval 1–20 (PIQLNPAPDGSAVNGTSSAE) is disordered. One can recognise a Protein kinase domain in the interval 61–356 (FEKISELGAG…LKQLMIHAFI (296 aa)). Residues 67–75 (LGAGNGGVV) and lysine 90 each bind ATP. Aspartate 183 serves as the catalytic Proton acceptor. A phosphoserine; by RAF mark is found at serine 211 and serine 215. Positions 275 to 299 (DSPVTETSPRQRAPGRPMSSYGSDS) are disordered.

Belongs to the protein kinase superfamily. STE Ser/Thr protein kinase family. MAP kinase kinase subfamily. MAPKK is itself dependent on Ser/Thr phosphorylation for activity catalyzed by MAP kinase kinase kinases (RAF or MEKK1).

It localises to the cytoplasm. It is found in the cytoskeleton. The protein resides in the microtubule organizing center. Its subcellular location is the centrosome. The protein localises to the spindle pole body. It localises to the nucleus. It carries out the reaction L-seryl-[protein] + ATP = O-phospho-L-seryl-[protein] + ADP + H(+). The catalysed reaction is L-threonyl-[protein] + ATP = O-phospho-L-threonyl-[protein] + ADP + H(+). It catalyses the reaction L-tyrosyl-[protein] + ATP = O-phospho-L-tyrosyl-[protein] + ADP + H(+). In terms of biological role, dual specificity protein kinase which acts as an essential component of the MAP kinase signal transduction pathway. Binding of extracellular ligands such as growth factors, cytokines and hormones to their cell-surface receptors activates RAS and this initiates RAF1 activation. RAF1 then further activates the dual-specificity protein kinases MAP2K1/MEK1 and MAP2K2/MEK2. Both MAP2K1/MEK1 and MAP2K2/MEK2 function specifically in the MAPK/ERK cascade, and catalyze the concomitant phosphorylation of a threonine and a tyrosine residue in a Thr-Glu-Tyr sequence located in the extracellular signal-regulated kinases MAPK3/ERK1 and MAPK1/ERK2, leading to their activation and further transduction of the signal within the MAPK/ERK cascade. Depending on the cellular context, this pathway mediates diverse biological functions such as cell growth, adhesion, survival and differentiation predominantly through the regulation of transcription, metabolism and cytoskeletal rearrangements. This chain is Dual specificity mitogen-activated protein kinase kinase 1 (MAP2K1), found in Serinus canaria (Island canary).